The chain runs to 221 residues: GTP-binding nuclear protein Ran-3 (221 aa).

Positions 10–174 (DYPSFKLVIV…LYLARKLAGD (165 aa)) constitute a Small GTPase Ran-type domain. Residue 21–28 (DGGTGKTT) participates in GTP binding. Residues 40–48 (KKYEPTIGV) are switch-I. GTP is bound by residues glycine 71, 125–128 (NKVD), and 153–155 (SAK). The segment at 71–87 (GQEKFGGLRDGYYIHGQ) is switch-II. A disordered region spans residues 201–221 (EAELAAAASQPLPDDDDDTFE).

This sequence belongs to the small GTPase superfamily. Ran family. In terms of assembly, found in a nuclear export complex with RanGTP, exportin and pre-miRNA. Interacts with RanBP1a and RanBP1b. Interacts with KPNB1.

Its subcellular location is the nucleus. Its function is as follows. GTP-binding protein involved in nucleocytoplasmic transport. Required for the import of protein into the nucleus and also for RNA export. Involved in chromatin condensation and control of cell cycle. The polypeptide is GTP-binding nuclear protein Ran-3 (RAN3) (Arabidopsis thaliana (Mouse-ear cress)).